We begin with the raw amino-acid sequence, 167 residues long: Peptide deformylase (167 aa).

Fe cation is bound by residues Cys91 and His133. Residue Glu134 is part of the active site. Residue His137 participates in Fe cation binding.

This sequence belongs to the polypeptide deformylase family. Requires Fe(2+) as cofactor.

The catalysed reaction is N-terminal N-formyl-L-methionyl-[peptide] + H2O = N-terminal L-methionyl-[peptide] + formate. Removes the formyl group from the N-terminal Met of newly synthesized proteins. Requires at least a dipeptide for an efficient rate of reaction. N-terminal L-methionine is a prerequisite for activity but the enzyme has broad specificity at other positions. The protein is Peptide deformylase of Buchnera aphidicola subsp. Schizaphis graminum (strain Sg).